The following is a 343-amino-acid chain: Tribbles homolog 2 (343 aa).

A disordered region spans residues 25–50 (EELSSIRSAEPSQSFSPNLGSPSPPE). Positions 29 to 45 (SIRSAEPSQSFSPNLGS) are enriched in polar residues. Residues 61 to 308 (IGKYLLLEPL…SQEILDHPWF (248 aa)) enclose the Protein kinase domain.

Belongs to the protein kinase superfamily. CAMK Ser/Thr protein kinase family. Tribbles subfamily.

Its subcellular location is the cytoplasm. It is found in the cytoskeleton. Functionally, interacts with MAPK kinases and regulates activation of MAP kinases. Does not display kinase activity. This chain is Tribbles homolog 2, found in Mus musculus (Mouse).